The primary structure comprises 663 residues: Forkhead protein sep1 (663 aa).

A DNA-binding region (fork-head) is located at residues 128-222; it reads KPPYSYAMLI…LKLKLRKPGV (95 aa). Disordered regions lie at residues 220-241 and 325-387; these read PGVNSRPAPPVQDVTSSTKYGS and SPLQ…DVET. Residues 340-355 show a composition bias toward low complexity; that stretch reads SPASSASPSESLRNES. Ser446 bears the Phosphoserine mark.

The protein localises to the nucleus. Its function is as follows. Required for promoter sequence element PCB-driven, M-phase-specific transcription. Acts as a transcriptional activator with a role in the regulation of mitosis. Regulates septation and the periodic transcription of cdc15. This chain is Forkhead protein sep1 (sep1), found in Schizosaccharomyces pombe (strain 972 / ATCC 24843) (Fission yeast).